We begin with the raw amino-acid sequence, 173 residues long: Protein GrpE (173 aa).

The protein belongs to the GrpE family. In terms of assembly, homodimer.

It is found in the cytoplasm. In terms of biological role, participates actively in the response to hyperosmotic and heat shock by preventing the aggregation of stress-denatured proteins, in association with DnaK and GrpE. It is the nucleotide exchange factor for DnaK and may function as a thermosensor. Unfolded proteins bind initially to DnaJ; upon interaction with the DnaJ-bound protein, DnaK hydrolyzes its bound ATP, resulting in the formation of a stable complex. GrpE releases ADP from DnaK; ATP binding to DnaK triggers the release of the substrate protein, thus completing the reaction cycle. Several rounds of ATP-dependent interactions between DnaJ, DnaK and GrpE are required for fully efficient folding. The chain is Protein GrpE from Campylobacter fetus subsp. fetus (strain 82-40).